The primary structure comprises 307 residues: MKLQGAGLGYRRNLAEDFLQLPSNNAIQFIEVAPENWSKMGGMARYQFDQAAERFPLAVHGLSLSLGGQAPLDRELLRNTKALINQYNSSFFSEHLSYCECEGHLYDLLPMPFTEEAVKHVAQRIRDVQDFLGLQISLENTSYYLHSPTSTMNEVEFLNAIAQEADCGIHLDVNNIYVNGVNHGLLDPYIFLDQVDVKRVNYIHIAGHDEEHSAAQVVENSANESFNKVKGAYRHLPELLIDTHGEAVKGTVWDLLEYAYQRLPTIPPTLLERDFNFPPFAELYAEVEHIAQLQQKYAHTEVMSYAA.

Belongs to the UPF0276 family.

The protein is UPF0276 protein HI_1600 of Haemophilus influenzae (strain ATCC 51907 / DSM 11121 / KW20 / Rd).